The following is a 206-amino-acid chain: Imidazoleglycerol-phosphate dehydratase (206 aa).

This sequence belongs to the imidazoleglycerol-phosphate dehydratase family.

It localises to the cytoplasm. It carries out the reaction D-erythro-1-(imidazol-4-yl)glycerol 3-phosphate = 3-(imidazol-4-yl)-2-oxopropyl phosphate + H2O. It participates in amino-acid biosynthesis; L-histidine biosynthesis; L-histidine from 5-phospho-alpha-D-ribose 1-diphosphate: step 6/9. The chain is Imidazoleglycerol-phosphate dehydratase from Leptospira interrogans serogroup Icterohaemorrhagiae serovar copenhageni (strain Fiocruz L1-130).